The chain runs to 554 residues: Glutamine--tRNA ligase (554 aa).

The 'HIGH' region motif lies at 34–44 (PEPNGYLHIGH). ATP is bound by residues 35 to 37 (EPN) and 41 to 47 (HIGHAKS). The L-glutamine site is built by Asp67 and Tyr212. Residues Thr231, 261 to 262 (RL), and 269 to 271 (MSK) each bind ATP. The short motif at 268 to 272 (VMSKR) is the 'KMSKS' region element. An interaction with tRNA region spans residues 317 to 324 (TKQDNTIE).

It belongs to the class-I aminoacyl-tRNA synthetase family. As to quaternary structure, monomer.

It localises to the cytoplasm. The enzyme catalyses tRNA(Gln) + L-glutamine + ATP = L-glutaminyl-tRNA(Gln) + AMP + diphosphate. This chain is Glutamine--tRNA ligase, found in Escherichia coli (strain 55989 / EAEC).